Reading from the N-terminus, the 712-residue chain is Transferrin-binding protein B (712 aa).

An N-terminal signal peptide occupies residues 1-20 (MNNPLVNQAAMVLPVFLLSA). Residue Cys21 is the site of N-palmitoyl cysteine attachment. A lipid anchor (S-diacylglycerol cysteine) is attached at Cys21. The N-terminal handle domain stretch occupies residues 59 to 196 (GGYGFAMRLK…YHGKEPSRQL (138 aa)). 7 disordered regions span residues 78 to 104 (EDEVKLDESDWEATGLPDEPKELPKRQ), 123 to 144 (PYLKPSNHQNGNTGNGINQPKN), 223 to 256 (IIQPSKSQGDRYSGFSGDDGEEYSNKNKSTLTDG), 309 to 338 (NGKATATDKPQQNSETKEHPFVSDSSSLSG), 364 to 398 (SAKTKDKPANGNTAAASGGTDAAASNGAAGTSSEN), 442 to 495 (ASES…GDTN), and 689 to 712 (NATNASGNSSATVVFGAKRQQPVR). A compositionally biased stretch (basic and acidic residues) spans 95–104 (DEPKELPKRQ). Over residues 128–144 (SNHQNGNTGNGINQPKN) the composition is skewed to polar residues. The interval 197 to 367 (PASGKITYKG…KVAVVGSAKT (171 aa)) is N-terminal beta barrel domain. 2 stretches are compositionally biased toward low complexity: residues 372-398 (ANGNTAAASGGTDAAASNGAAGTSSEN) and 446-459 (GNNQANQGTNGGTA). The segment at 389–555 (NGAAGTSSEN…SMFLQGERTD (167 aa)) is C-terminal handle domain. Basic and acidic residues predominate over residues 462 to 475 (RKFDHTPESDKKDA). Polar residues-rich tracts occupy residues 477 to 495 (AGTQTNGAQTASNTAGDTN) and 689 to 700 (NATNASGNSSAT). The tract at residues 556–712 (EKEIPSEQNI…FGAKRQQPVR (157 aa)) is C-terminal beta barrel domain.

It belongs to the TbpB family. Isotype II subfamily. As to quaternary structure, binds only human holo-transferrin (TF), via the TF C-terminus. Forms a large complex with TF and TbpA. Interacts via its C-terminal domain with Slam1.

It is found in the cell outer membrane. The protein resides in the cell surface. Functionally, neisseria acquires iron by extracting it from serum transferrin (TF) in its human host. Acts as a TF receptor and is required for TF utilization. Involved in the initial capture of TF. Helps select only those TF molecules that can be used as an iron source and concentrates them on the cell surface, maintaining the iron-loaded status of the TF C-terminal lobe until its delivery to TbpA. The chain is Transferrin-binding protein B from Neisseria meningitidis serogroup B (strain ATCC BAA-335 / MC58).